Consider the following 436-residue polypeptide: Protein translocase subunit SecY (436 aa).

The next 10 membrane-spanning stretches (helical) occupy residues 19–39 (ILFT…TVPG), 68–88 (FSVF…VQLL), 116–136 (YISL…FNAL), 151–171 (LFIG…GEQI), 179–199 (GVSM…VKGI), 216–236 (IIFV…TTYV), 269–289 (VIPV…LQFL), 313–333 (GIAM…FVQI), 372–392 (VGSL…DLFG), and 395–415 (DTVA…IEGM).

It belongs to the SecY/SEC61-alpha family. In terms of assembly, component of the Sec protein translocase complex. Heterotrimer consisting of SecY, SecE and SecG subunits. The heterotrimers can form oligomers, although 1 heterotrimer is thought to be able to translocate proteins. Interacts with the ribosome. Interacts with SecDF, and other proteins may be involved. Interacts with SecA.

The protein resides in the cell membrane. The central subunit of the protein translocation channel SecYEG. Consists of two halves formed by TMs 1-5 and 6-10. These two domains form a lateral gate at the front which open onto the bilayer between TMs 2 and 7, and are clamped together by SecE at the back. The channel is closed by both a pore ring composed of hydrophobic SecY resides and a short helix (helix 2A) on the extracellular side of the membrane which forms a plug. The plug probably moves laterally to allow the channel to open. The ring and the pore may move independently. This is Protein translocase subunit SecY from Streptococcus gordonii (strain Challis / ATCC 35105 / BCRC 15272 / CH1 / DL1 / V288).